The following is a 693-amino-acid chain: Elongation factor G (693 aa).

Residues 8–282 enclose the tr-type G domain; that stretch reads KNTRNIGIMA…AAIEYLPSPL (275 aa). Residues 17–24, 81–85, and 135–138 each bind GTP; these read AHIDAGKT, DTPGH, and NKMD.

It belongs to the TRAFAC class translation factor GTPase superfamily. Classic translation factor GTPase family. EF-G/EF-2 subfamily.

Its subcellular location is the cytoplasm. Functionally, catalyzes the GTP-dependent ribosomal translocation step during translation elongation. During this step, the ribosome changes from the pre-translocational (PRE) to the post-translocational (POST) state as the newly formed A-site-bound peptidyl-tRNA and P-site-bound deacylated tRNA move to the P and E sites, respectively. Catalyzes the coordinated movement of the two tRNA molecules, the mRNA and conformational changes in the ribosome. In Macrococcus caseolyticus (strain JCSC5402) (Macrococcoides caseolyticum), this protein is Elongation factor G.